A 178-amino-acid polypeptide reads, in one-letter code: 6,7-dimethyl-8-ribityllumazine synthase (178 aa).

Residues phenylalanine 23, 61–63, and 85–87 contribute to the 5-amino-6-(D-ribitylamino)uracil site; these read SFE and AVI. A (2S)-2-hydroxy-3-oxobutyl phosphate-binding site is contributed by 90 to 91; the sequence is QT. The active-site Proton donor is the histidine 93. Tyrosine 118 is a 5-amino-6-(D-ribitylamino)uracil binding site. Arginine 132 contributes to the (2S)-2-hydroxy-3-oxobutyl phosphate binding site.

The protein belongs to the DMRL synthase family.

The catalysed reaction is (2S)-2-hydroxy-3-oxobutyl phosphate + 5-amino-6-(D-ribitylamino)uracil = 6,7-dimethyl-8-(1-D-ribityl)lumazine + phosphate + 2 H2O + H(+). It participates in cofactor biosynthesis; riboflavin biosynthesis; riboflavin from 2-hydroxy-3-oxobutyl phosphate and 5-amino-6-(D-ribitylamino)uracil: step 1/2. Catalyzes the formation of 6,7-dimethyl-8-ribityllumazine by condensation of 5-amino-6-(D-ribitylamino)uracil with 3,4-dihydroxy-2-butanone 4-phosphate. This is the penultimate step in the biosynthesis of riboflavin. This Thermosynechococcus vestitus (strain NIES-2133 / IAM M-273 / BP-1) protein is 6,7-dimethyl-8-ribityllumazine synthase.